Consider the following 204-residue polypeptide: NAD(P)H dehydrogenase (quinone) (204 aa).

The Flavodoxin-like domain maps to 3 to 194 (VLIVFYSMYG…AGARYQGRHV (192 aa)). FMN-binding positions include 9 to 14 (SMYGHI) and 82 to 84 (TRF). Tyrosine 11 lines the NAD(+) pocket. Tryptophan 102 is a substrate binding site. Residue histidine 138 participates in FMN binding.

Belongs to the WrbA family. The cofactor is FMN.

It carries out the reaction a quinone + NADH + H(+) = a quinol + NAD(+). It catalyses the reaction a quinone + NADPH + H(+) = a quinol + NADP(+). The sequence is that of NAD(P)H dehydrogenase (quinone) from Syntrophobacter fumaroxidans (strain DSM 10017 / MPOB).